Reading from the N-terminus, the 185-residue chain is MVKLPHIYEEIDIPENVTVEINGLKVKVNGPKGSIERDFSHVRNIILRKENSKIIVETFFADRRKKALVGTIASHIENMIKGVLKGYRYKLKIIYSHFPITVEVDDRNRIVRIKNFLGEKSDRIAKIIGEDVKVTVKGEDIIVEGIDIEHVGQTAANIELATKVKDKDRRVFADGIYIYDWGEEE.

Belongs to the universal ribosomal protein uL6 family. Part of the 50S ribosomal subunit.

This protein binds to the 23S rRNA, and is important in its secondary structure. It is located near the subunit interface in the base of the L7/L12 stalk, and near the tRNA binding site of the peptidyltransferase center. The protein is Large ribosomal subunit protein uL6 of Staphylothermus marinus (strain ATCC 43588 / DSM 3639 / JCM 9404 / F1).